Consider the following 311-residue polypeptide: Pyrimidine-specific ribonucleoside hydrolase RihA (311 aa).

His240 is an active-site residue.

The protein belongs to the IUNH family. RihA subfamily.

In terms of biological role, hydrolyzes with equal efficiency cytidine or uridine to ribose and cytosine or uracil, respectively. The protein is Pyrimidine-specific ribonucleoside hydrolase RihA of Escherichia coli O139:H28 (strain E24377A / ETEC).